The following is a 558-amino-acid chain: uncharacterized protein (558 aa).

Residues 7–206 (SNFIDMLRLG…FACFLEGMLS (200 aa)) form the DhaL domain.

This is an uncharacterized protein from Mycoplasma pneumoniae (strain ATCC 29342 / M129 / Subtype 1) (Mycoplasmoides pneumoniae).